The sequence spans 515 residues: C-glycoside 3-oxidase (515 aa).

Glu41 serves as a coordination point for FAD. The span at 62–82 (ERAHAQRRSEGPHAREDDDRV) shows a compositional bias: basic and acidic residues. The interval 62-90 (ERAHAQRRSEGPHAREDDDRVGGIVKSAQ) is disordered. FAD is bound by residues Ser118, Asn120, Met124, Thr129, Ala131, and Val237. His444 serves as the catalytic Proton acceptor. FAD is bound by residues Asn478 and Thr490.

This sequence belongs to the GMC oxidoreductase family. As to quaternary structure, monomer. It depends on FAD as a cofactor.

It carries out the reaction isoorientin + O2 = 3''-dehydroisoorientin + H2O2. The catalysed reaction is mangiferin + O2 = 3'-dehydromangiferin + H2O2. Functionally, FAD-dependent C-glycoside-metabolizing enzyme that participates in the degradation of certain C-glycosides by catalyzing the oxidation of the hydroxyl group at the C3 position of the sugar moiety. Shows oxidase activity toward C-glycosides such as isoorientin and mangiferin but cannot use carminic acid, puerarin, orientin or aloesin. Shows weak activity (100 to 1000-fold lower) with O-glycosides. Probably plays a crucial role in the metabolism of C-glycosides in nature. The protein is C-glycoside 3-oxidase of Microbacterium trichothecenolyticum (Aureobacterium trichothecenolyticum).